The primary structure comprises 1930 residues: Myosin-16 (1930 aa).

Residues 35-84 (DIKKSCWVKDEKEGFIAGEIQSEQGDQVTVKTVNNQTVTVKKDDVQQMNP) form the Myosin N-terminal SH3-like domain. A Myosin motor domain is found at 88–774 (YQASDMADMT…ILAKLEDMRD (687 aa)). Residue 181-188 (GESGAGKT) coordinates ATP. Actin-binding stretches follow at residues 652-674 (LNKLMATLHSTAPHFVRCIVPNE) and 753-767 (KIGHTKVFFRAGILA). The region spanning 777–806 (LAKIMTMLQCRLRGFLMRIEFKKMLERRIG) is the IQ domain. Positions 835-1921 (LLNVARQEEE…ALNKLRTRHR (1087 aa)) form a coiled coil. Residues 1116–1137 (EELEAERSMRAKVEKQRSDLSR) form a disordered region. The segment covering 1120 to 1137 (AERSMRAKVEKQRSDLSR) has biased composition (basic and acidic residues).

It belongs to the TRAFAC class myosin-kinesin ATPase superfamily. Myosin family.

It is found in the cytoplasm. Its subcellular location is the myofibril. In terms of biological role, may play a role in masticatory muscles contraction. In Canis lupus familiaris (Dog), this protein is Myosin-16.